We begin with the raw amino-acid sequence, 138 residues long: Basic phospholipase A2 PL-X' (138 aa).

The first 16 residues, 1–16, serve as a signal peptide directing secretion; the sequence is MRTLWIMAVLLVGVEG. Cystine bridges form between cysteine 42–cysteine 131, cysteine 44–cysteine 60, cysteine 59–cysteine 111, cysteine 65–cysteine 138, cysteine 66–cysteine 104, cysteine 73–cysteine 97, and cysteine 91–cysteine 102. 3 residues coordinate Ca(2+): tyrosine 43, glycine 45, and glycine 47. Residue histidine 63 is part of the active site. Aspartate 64 provides a ligand contact to Ca(2+). Aspartate 105 is an active-site residue.

The protein belongs to the phospholipase A2 family. Group II subfamily. D49 sub-subfamily. Requires Ca(2+) as cofactor. As to expression, expressed by the venom gland.

The protein localises to the secreted. It catalyses the reaction a 1,2-diacyl-sn-glycero-3-phosphocholine + H2O = a 1-acyl-sn-glycero-3-phosphocholine + a fatty acid + H(+). Functionally, PLA2 catalyzes the calcium-dependent hydrolysis of the 2-acyl groups in 3-sn-phosphoglycerides. This is Basic phospholipase A2 PL-X' from Protobothrops flavoviridis (Habu).